Here is a 501-residue protein sequence, read N- to C-terminus: MNELLTLTAAELGERIAARQISSEEVTQAHLDRISEVDGDIHAFLLVDHAGALDAARRIDARIADGEHLGPLAGVPLAVKDLFCTKGIATTASSQMLEGWIPPYDSTIVTRCKDAGMVILGKTNLDEFAMGSSTETSAFGPTHNPWDLERVPGGSGGGSAASLASFQAPLALGTDTGGSIRQPGAVTGTVGIKPTYGSTSRYGVIAMASSLDTPGPCARTVLDAALLHQAIAGHDAMDQTTINQPTPAVVEAARQTDVSGVRIGVVTELSGQVYDPQVEARFHEAVEMLIEAGAEVVEVSCPNFDLALPAYYLIQPAEVSSNLARYDAMRYGLRVNDDGEHSAEQVMRATRGAGLGAEAKRRIILGTYALSAGYYDAYYGSAQKVRTLIQRDFEKAWQMCDVLVSPATPTTAFRLGERTADPMAMYRSDLCTVPANMAGSPAGSFPIGLSETDGMPVGMQVMAPIMADDRIYRVGAALERLLHEKWGAPLLAKAPEVRGER.

Catalysis depends on charge relay system residues K80 and S155. S179 functions as the Acyl-ester intermediate in the catalytic mechanism.

It belongs to the amidase family. GatA subfamily. As to quaternary structure, heterotrimer of A, B and C subunits.

It catalyses the reaction L-glutamyl-tRNA(Gln) + L-glutamine + ATP + H2O = L-glutaminyl-tRNA(Gln) + L-glutamate + ADP + phosphate + H(+). Functionally, allows the formation of correctly charged Gln-tRNA(Gln) through the transamidation of misacylated Glu-tRNA(Gln) in organisms which lack glutaminyl-tRNA synthetase. The reaction takes place in the presence of glutamine and ATP through an activated gamma-phospho-Glu-tRNA(Gln). The sequence is that of Glutamyl-tRNA(Gln) amidotransferase subunit A from Cutibacterium acnes (strain DSM 16379 / KPA171202) (Propionibacterium acnes).